Consider the following 234-residue polypeptide: Eosinophil granule major basic protein 2 (234 aa).

The first 15 residues, 1–15 (MKLLLLLALLVGAVS), serve as a signal peptide directing secretion. Residues 16-115 (TRHLNVDTSS…VKFEGSPGCK (100 aa)) constitute a propeptide, acidic. A disordered region spans residues 26–96 (LQSLQGEESL…SSELDMGPED (71 aa)). Residue serine 69 is glycosylated (O-linked (Xyl...) (glycosaminoglycan) serine). Positions 71-94 (SEDDPEEEEEEKEMESSSELDMGP) are enriched in acidic residues. One can recognise a C-type lectin domain in the interval 133–234 (SVCQRCFRGN…GVRRAFSCSY (102 aa)). Intrachain disulfides connect cysteine 135/cysteine 232 and cysteine 209/cysteine 224.

In terms of processing, nitrated.

The protein localises to the cytoplasmic granule. Functionally, MBP may play some important roles in the allergic reactions and inflammations, since MBP is capable of releasing histamine from mast cells and damaging the epithelial cells of bronchial tubes. Antiparasitic and antibiotic. The chain is Eosinophil granule major basic protein 2 (MBP2) from Cavia porcellus (Guinea pig).